The following is a 625-amino-acid chain: Vitamin B12 transporter BtuB (625 aa).

An N-terminal signal peptide occupies residues 1–21 (MTIKKYTLLTALSVTAFSGWA). The short motif at 31-38 (DEMVVTAN) is the TonB box element. A TBDR plug domain is found at 43–157 (PKSSVLAPVD…IGGVINILTG (115 aa)). Residues Ser90, Asn97, and 115-116 (IT) each bind cyanocob(III)alamin. The region spanning 160-625 (KPGTTLSAGL…EYYFTGSYNF (466 aa)) is the TBDR beta-barrel domain. Transmembrane regions (beta stranded) follow at residues 163-170 (TTLSAGLG), 174-183 (YQTYDGSTQQ), and 189-200 (TTVTLAGNYTYS). Residues Asp204, Gln217, Asp219, and Asp221 each coordinate Ca(2+). Beta stranded transmembrane passes span 223–233 (FMGKMLWAGLE) and 238–254 (EQFNGFARVYGFDNRSD). Ca(2+) is bound by residues Tyr255, Asp256, and Asp269. The next 14 membrane-spanning stretches (beta stranded) occupy residues 271-285 (RKLSSRTYDTGLRYK), 287-304 (GIYASQFIASYNRTKDYN), 317-333 (SLDEAEQYNLQWGNTFQ), 336-345 (NGMISAGADW), 363-379 (FTQHNTGIYLTGQQQIS), 381-391 (VTLEGAVRSDD), 395-410 (FGWHSTWQTSAGWEFI), 413-427 (YRLIGSYGTAYKAPN), 445-454 (ESKQWEGGVE), 460-469 (LTWRLSAYRN), 484-501 (YFNINKATIKGVEWTGSF), 505-520 (PLSHQVTLEYLDPRNA), 528-540 (RRAKQQVKYQLDW), and 546-561 (DWSVTYQYLGQRYDKD). Ser317 is a cyanocob(III)alamin binding site. A cyanocob(III)alamin-binding site is contributed by Arg528. Residue Tyr562 coordinates cyanocob(III)alamin. Transmembrane regions (beta stranded) follow at residues 569 to 583 (TVELGGVSLWDLAVS), 596 to 607 (IANLFDKDYEMV), and 613 to 625 (PGREYYFTGSYNF). The short motif at 608–625 (YGYQTPGREYYFTGSYNF) is the TonB C-terminal box element.

This sequence belongs to the TonB-dependent receptor family. BtuB (TC 1.B.14.3.1) subfamily.

It is found in the cell outer membrane. Functionally, involved in the active translocation of vitamin B12 (cyanocobalamin) across the outer membrane to the periplasmic space. It derives its energy for transport by interacting with the trans-periplasmic membrane protein TonB. The sequence is that of Vitamin B12 transporter BtuB from Yersinia pestis bv. Antiqua (strain Antiqua).